Reading from the N-terminus, the 1375-residue chain is DNA-directed RNA polymerase subunit beta (1375 aa).

The protein belongs to the RNA polymerase beta chain family. As to quaternary structure, the RNAP catalytic core consists of 2 alpha, 1 beta, 1 beta' and 1 omega subunit. When a sigma factor is associated with the core the holoenzyme is formed, which can initiate transcription.

The enzyme catalyses RNA(n) + a ribonucleoside 5'-triphosphate = RNA(n+1) + diphosphate. In terms of biological role, DNA-dependent RNA polymerase catalyzes the transcription of DNA into RNA using the four ribonucleoside triphosphates as substrates. The chain is DNA-directed RNA polymerase subunit beta from Coxiella burnetii (strain RSA 331 / Henzerling II).